The following is a 367-amino-acid chain: Leu/Ile/Val-binding protein (367 aa).

The N-terminal stretch at 1-23 (MNMKGKALLAGCIALSLSNMAFA) is a signal peptide. A disulfide bridge links Cys76 with Cys101.

The protein belongs to the leucine-binding protein family.

The protein resides in the periplasm. Its function is as follows. This protein is a component of the leucine, isoleucine, valine, (threonine) transport system, which is one of the two periplasmic binding protein-dependent transport systems of the high-affinity transport of the branched-chain amino acids. The sequence is that of Leu/Ile/Val-binding protein (livJ) from Citrobacter freundii.